We begin with the raw amino-acid sequence, 354 residues long: Phospho-N-acetylmuramoyl-pentapeptide-transferase (354 aa).

Helical transmembrane passes span 23 to 43, 66 to 86, 88 to 108, 130 to 150, 161 to 181, 193 to 213, 230 to 250, 257 to 277, 282 to 302, and 331 to 351; these read FSFF…IAWA, TPTM…LLCA, LDNV…ALGF, LAVQ…HGEL, FALL…IVAA, GLAS…AYIC, VGET…FLWF, VFMG…MGVM, ILLI…ILQV, and KIIV…LTAL.

It belongs to the glycosyltransferase 4 family. MraY subfamily. The cofactor is Mg(2+).

It is found in the cell inner membrane. The enzyme catalyses UDP-N-acetyl-alpha-D-muramoyl-L-alanyl-gamma-D-glutamyl-meso-2,6-diaminopimeloyl-D-alanyl-D-alanine + di-trans,octa-cis-undecaprenyl phosphate = di-trans,octa-cis-undecaprenyl diphospho-N-acetyl-alpha-D-muramoyl-L-alanyl-D-glutamyl-meso-2,6-diaminopimeloyl-D-alanyl-D-alanine + UMP. It functions in the pathway cell wall biogenesis; peptidoglycan biosynthesis. Its function is as follows. Catalyzes the initial step of the lipid cycle reactions in the biosynthesis of the cell wall peptidoglycan: transfers peptidoglycan precursor phospho-MurNAc-pentapeptide from UDP-MurNAc-pentapeptide onto the lipid carrier undecaprenyl phosphate, yielding undecaprenyl-pyrophosphoryl-MurNAc-pentapeptide, known as lipid I. This is Phospho-N-acetylmuramoyl-pentapeptide-transferase from Campylobacter curvus (strain 525.92).